Here is a 156-residue protein sequence, read N- to C-terminus: Deoxyuridine 5'-triphosphate nucleotidohydrolase (156 aa).

Residues Arg76–Gly78, Asn89, Thr93–Asp95, and Lys103 contribute to the substrate site.

The protein belongs to the dUTPase family. Mg(2+) is required as a cofactor.

It carries out the reaction dUTP + H2O = dUMP + diphosphate + H(+). It functions in the pathway pyrimidine metabolism; dUMP biosynthesis; dUMP from dCTP (dUTP route): step 2/2. This enzyme is involved in nucleotide metabolism: it produces dUMP, the immediate precursor of thymidine nucleotides and it decreases the intracellular concentration of dUTP so that uracil cannot be incorporated into DNA. This chain is Deoxyuridine 5'-triphosphate nucleotidohydrolase, found in Agrobacterium fabrum (strain C58 / ATCC 33970) (Agrobacterium tumefaciens (strain C58)).